Reading from the N-terminus, the 285-residue chain is Bifunctional protein FolD (285 aa).

Residues 165–167 (GRS) and S190 contribute to the NADP(+) site.

Belongs to the tetrahydrofolate dehydrogenase/cyclohydrolase family. Homodimer.

The enzyme catalyses (6R)-5,10-methylene-5,6,7,8-tetrahydrofolate + NADP(+) = (6R)-5,10-methenyltetrahydrofolate + NADPH. The catalysed reaction is (6R)-5,10-methenyltetrahydrofolate + H2O = (6R)-10-formyltetrahydrofolate + H(+). It participates in one-carbon metabolism; tetrahydrofolate interconversion. Functionally, catalyzes the oxidation of 5,10-methylenetetrahydrofolate to 5,10-methenyltetrahydrofolate and then the hydrolysis of 5,10-methenyltetrahydrofolate to 10-formyltetrahydrofolate. This is Bifunctional protein FolD from Burkholderia orbicola (strain AU 1054).